The following is an 86-amino-acid chain: Small ribosomal subunit protein bS16 (86 aa).

This sequence belongs to the bacterial ribosomal protein bS16 family.

The sequence is that of Small ribosomal subunit protein bS16 from Bordetella avium (strain 197N).